The following is a 327-amino-acid chain: Tetraacyldisaccharide 4'-kinase (327 aa).

52-59 contacts ATP; sequence TAGGAGKT.

This sequence belongs to the LpxK family.

The catalysed reaction is a lipid A disaccharide + ATP = a lipid IVA + ADP + H(+). Its pathway is glycolipid biosynthesis; lipid IV(A) biosynthesis; lipid IV(A) from (3R)-3-hydroxytetradecanoyl-[acyl-carrier-protein] and UDP-N-acetyl-alpha-D-glucosamine: step 6/6. In terms of biological role, transfers the gamma-phosphate of ATP to the 4'-position of a tetraacyldisaccharide 1-phosphate intermediate (termed DS-1-P) to form tetraacyldisaccharide 1,4'-bis-phosphate (lipid IVA). The protein is Tetraacyldisaccharide 4'-kinase of Gluconacetobacter diazotrophicus (strain ATCC 49037 / DSM 5601 / CCUG 37298 / CIP 103539 / LMG 7603 / PAl5).